A 151-amino-acid chain; its full sequence is Large ribosomal subunit protein bL9 (151 aa).

The protein belongs to the bacterial ribosomal protein bL9 family.

In terms of biological role, binds to the 23S rRNA. The sequence is that of Large ribosomal subunit protein bL9 from Prochlorococcus marinus (strain MIT 9301).